Here is a 534-residue protein sequence, read N- to C-terminus: Bifunctional pantoate ligase/cytidylate kinase (534 aa).

The tract at residues 1–302 is pantoate--beta-alanine ligase; the sequence is MRLLTTVAAL…LGSTRLIDNT (302 aa). 48–55 is a binding site for ATP; the sequence is MGSLHQGH. Catalysis depends on His55, which acts as the Proton donor. (R)-pantoate is bound at residue Gln79. Beta-alanine is bound at residue Gln79. 172–175 lines the ATP pocket; sequence GQKD. A (R)-pantoate-binding site is contributed by Gln178. Residues Val201 and 209 to 212 contribute to the ATP site; that span reads CSSR. The cytidylate kinase stretch occupies residues 303–534; sequence ILRDRQPIIA…DYYQQRLSQW (232 aa).

The protein in the N-terminal section; belongs to the pantothenate synthetase family. This sequence in the C-terminal section; belongs to the cytidylate kinase family. Type 1 subfamily.

It localises to the cytoplasm. The enzyme catalyses (R)-pantoate + beta-alanine + ATP = (R)-pantothenate + AMP + diphosphate + H(+). It carries out the reaction CMP + ATP = CDP + ADP. It catalyses the reaction dCMP + ATP = dCDP + ADP. Its pathway is cofactor biosynthesis; (R)-pantothenate biosynthesis; (R)-pantothenate from (R)-pantoate and beta-alanine: step 1/1. In terms of biological role, catalyzes the condensation of pantoate with beta-alanine in an ATP-dependent reaction via a pantoyl-adenylate intermediate. Its function is as follows. Catalyzes the transfer of a phosphate group from ATP to either CMP or dCMP to form CDP or dCDP and ADP, respectively. This Nostoc sp. (strain PCC 7120 / SAG 25.82 / UTEX 2576) protein is Bifunctional pantoate ligase/cytidylate kinase.